The chain runs to 1796 residues: Non-reducing polyketide synthase nscA (1796 aa).

The interval 18-256 is N-terminal acylcarrier protein transacylase domain (SAT); it reads DDLKDLFRRL…PLPVYDGLCH (239 aa). A Ketosynthase family 3 (KS3) domain is found at 392–825; that stretch reads SSKLAIVGMA…GGNTTLLLED (434 aa). Active-site for beta-ketoacyl synthase activity residues include C565, H700, and H743. The segment at 931 to 1251 is malonyl-CoA:ACP transacylase (MAT) domain; sequence FTGQGAYYSG…SLVTLHLAGL (321 aa). A product template (PT) domain region spans residues 1317–1636; sequence TSLVHQITAE…RLLMDRFFSP (320 aa). Residues 1321 to 1457 are N-terminal hotdog fold; that stretch reads HQITAETVEA…ATVRFEDPVA (137 aa). Residues 1321-1631 enclose the PKS/mFAS DH domain; it reads HQITAETVEA…FRRVPRLLMD (311 aa). H1353 functions as the Proton acceptor; for dehydratase activity in the catalytic mechanism. Positions 1485-1631 are C-terminal hotdog fold; sequence ASRLSKPLAY…FRRVPRLLMD (147 aa). D1542 functions as the Proton donor; for dehydratase activity in the catalytic mechanism. Residues 1688-1720 are disordered; sequence TPESTPPLAPSSESSTPKESPIATPPESERADP. Low complexity predominate over residues 1697 to 1708; it reads PSSESSTPKESP. The 78-residue stretch at 1719-1796 folds into the Carrier domain; that stretch reads DPMDNMVSQC…EMTAWIEEYC (78 aa). S1756 bears the O-(pantetheine 4'-phosphoryl)serine mark.

The cofactor is pantetheine 4'-phosphate.

It functions in the pathway secondary metabolite biosynthesis. Functionally, non-reducing polyketide synthase; part of the gene cluster that mediates the biosynthesis of neosartoricin B, a prenylated anthracenone that probably exhibits T-cell antiproliferative activity, suggestive of a physiological role as an immunosuppressive agent. The non-reducing polyketide synthase nscA probably synthesizes and cyclizes the decaketide backbone. The hydrolase nscB then mediates the product release through hydrolysis followed by spontaneous decarboxylation. The prenyltransferase nscD catalyzes the addition of the dimethylallyl group to the aromatic C5. The FAD-dependent monooxygenase nscC is then responsible for the stereospecific hydroxylation at C2. Neosartoricin B can be converted into two additional compounds neosartoricins C and D. Neosartoricin C is a spirocyclic compound that is cyclized through the attack of C3 hydroxyl on C14, followed by dehydration. On the other hand, neosartoricin D is a further cyclized compound in which attack of C2 on C14 in neosartoricin C results in the formation of the acetal-containing dioxabicyclo-octanone ring. Both of these compounds are novel and possibly represent related metabolites of the gene cluster. The protein is Non-reducing polyketide synthase nscA of Arthroderma otae (strain ATCC MYA-4605 / CBS 113480) (Microsporum canis).